The following is a 711-amino-acid chain: Polyribonucleotide nucleotidyltransferase (711 aa).

Positions 491 and 497 each coordinate Mg(2+). One can recognise a KH domain in the interval 559 to 618 (PRLITIKINPEKIRDVIGKGGAVIRALTEETGTQIDISDEGVVTIASVDAAAGQEAKRRI). In terms of domain architecture, S1 motif spans 628-696 (GKIYEGTVLK…DRGRLKLSMK (69 aa)).

It belongs to the polyribonucleotide nucleotidyltransferase family. It depends on Mg(2+) as a cofactor.

The protein localises to the cytoplasm. It catalyses the reaction RNA(n+1) + phosphate = RNA(n) + a ribonucleoside 5'-diphosphate. In terms of biological role, involved in mRNA degradation. Catalyzes the phosphorolysis of single-stranded polyribonucleotides processively in the 3'- to 5'-direction. This chain is Polyribonucleotide nucleotidyltransferase, found in Janthinobacterium sp. (strain Marseille) (Minibacterium massiliensis).